Consider the following 235-residue polypeptide: 6-carboxyhexanoate--CoA ligase (235 aa).

This sequence belongs to the BioW family. As to quaternary structure, homodimer. The cofactor is Mg(2+).

The catalysed reaction is heptanedioate + ATP + CoA = 6-carboxyhexanoyl-CoA + AMP + diphosphate. It participates in metabolic intermediate metabolism; pimeloyl-CoA biosynthesis; pimeloyl-CoA from pimelate: step 1/1. In terms of biological role, catalyzes the transformation of pimelate into pimeloyl-CoA with concomitant hydrolysis of ATP to AMP. This Desulfovibrio desulfuricans (strain ATCC 27774 / DSM 6949 / MB) protein is 6-carboxyhexanoate--CoA ligase.